The chain runs to 280 residues: Protein FAM131C (280 aa).

The segment at 195-280 (QDSLPSGPSQ…LWEEDEVFYN (86 aa)) is disordered. Positions 197 to 211 (SLPSGPSQDDSLQAF) are enriched in polar residues. The span at 215-227 (SPSPDSCPSPEEP) shows a compositional bias: pro residues.

This sequence belongs to the FAM131 family.

This is Protein FAM131C (FAM131C) from Homo sapiens (Human).